A 1648-amino-acid polypeptide reads, in one-letter code: eIF-2-alpha kinase GCN2 (1648 aa).

Residues 1–26 (MAGGRGASGRGRAEPQESYSQRQDHE) form a disordered region. The RWD domain occupies 25–137 (HELQALEAIY…HHVQSFLSEH (113 aa)). Positions 146–205 (HEEMLERQAQEKQQRLLEARRKEEQEQREILHEIQRRKEEIKEEKKRKEMAKQERLEITS) form a coiled coil. S230 carries the phosphoserine modification. Protein kinase domains lie at 286 to 538 (VGSD…HSFI) and 589 to 1000 (FEEL…SELL). ATP contacts are provided by residues 595–603 (LGKGAFGAV) and K618. The segment at 661–784 (PAVPGTPPPD…CNQKDGSHEI (124 aa)) is disordered. T666 carries the post-translational modification Phosphothreonine. Polar residues-rich tracts occupy residues 673-686 (PQAQDSPATCGKTS) and 704-722 (LSSSVEWSTSAERSTSTRF). Acidic residues-rich tracts occupy residues 730–739 (SSDEEDEDER) and 753–763 (SDSDIIFDNED). The segment covering 775 to 784 (CNQKDGSHEI) has biased composition (basic and acidic residues). D846 (proton acceptor) is an active-site residue. T869 bears the Phosphothreonine mark. A phosphothreonine; by autocatalysis mark is found at T898 and T903. Residues 1021–1492 (IDGKAYRTMM…DHVMQKLRTK (472 aa)) form a histidyl-tRNA synthetase-like region. Position 1258 is an N6-acetyllysine (K1258).

It belongs to the protein kinase superfamily. Ser/Thr protein kinase family. GCN2 subfamily. Homodimer; homodimerization is important for kinase activation by uncharged tRNAs. Interacts with GCN1; this interaction stimulates EIF2AK4/GCN2 kinase activity and is impaired by IMPACT upon a variety of stress conditions, such as amino acid depletion, UV-C irradiation, proteasome inhibitor treatment and glucose deprivation. Interacts with DNAJC3; this interaction inhibits EIF2AK4/GCN2 kinase activity during endoplasmic reticulum (ER), hypothermic and amino acid-starving stress conditions. Interacts with MAP3K20; activates EIF2AK4/GCN2 kinase activity in response to moderate ribotoxic stress. Autophosphorylated; autophosphorylation on Thr-898 is increased upon amino acid starvation and in UV irradiation cells and inhibited in presence of IMPACT. As to expression, expressed in liver. Expressed predominantly in the hippocampal CA1 region and the dentate gyrus, and to a lesser degree in CA3 (at protein level). Expressed in liver, lung, brain, kidney, skeletal muscle and testis. Expressed weakly in heart and spleen. Expressed in the hippocampal CA1 and CA3 regions, the dentate gyrus and cerebellum. Isoform 1 is widely expressed. Isoform 1 is expressed in brain, liver, skeletal muscle and testis. Isoform 3 is expressed in lung, brain, testis, prostate and choroid plexus. Isoform 4 is expressed in muscle, lung, kidney, brain, testis and prostate.

The protein resides in the cytoplasm. It catalyses the reaction L-seryl-[protein] + ATP = O-phospho-L-seryl-[protein] + ADP + H(+). The catalysed reaction is L-threonyl-[protein] + ATP = O-phospho-L-threonyl-[protein] + ADP + H(+). Its activity is regulated as follows. (Microbial infection) Kinase activity is enhanced by alphavirus genomic RNA sequences. Kinase activity is stimulated upon binding to uncharged tRNAs. Activated by serum starvation (in vitro). Functionally, metabolic-stress sensing protein kinase that phosphorylates the alpha subunit of eukaryotic translation initiation factor 2 (EIF2S1/eIF-2-alpha) in response to low amino acid availability. Plays a role as an activator of the integrated stress response (ISR) required for adaptation to amino acid starvation. EIF2S1/eIF-2-alpha phosphorylation in response to stress converts EIF2S1/eIF-2-alpha into a global protein synthesis inhibitor, leading to a global attenuation of cap-dependent translation, and thus to a reduced overall utilization of amino acids, while concomitantly initiating the preferential translation of ISR-specific mRNAs, such as the transcriptional activator ATF4, and hence allowing ATF4-mediated reprogramming of amino acid biosynthetic gene expression to alleviate nutrient depletion. Required for the translational induction of protein kinase PRKCH following amino acid starvation. Binds uncharged tRNAs. Involved in cell cycle arrest by promoting cyclin D1 mRNA translation repression after the unfolded protein response pathway (UPR) activation or cell cycle inhibitor CDKN1A/p21 mRNA translation activation in response to amino acid deprivation. Plays a role in the consolidation of synaptic plasticity, learning as well as formation of long-term memory. Plays a role in neurite outgrowth inhibition. Plays a role in feeding behavior to maintain amino acid homeostasis; contributes to the innate aversion toward diets of imbalanced amino acid composition. Plays a proapoptotic role in response to glucose deprivation. Promotes global cellular protein synthesis repression in response to UV irradiation independently of the stress-activated protein kinase/c-Jun N-terminal kinase (SAPK/JNK) and p38 MAPK signaling pathways. Its function is as follows. (Microbial infection) Plays a role in the antiviral response against alphavirus infection; impairs early viral mRNA translation of the incoming genomic virus RNA, thus preventing alphavirus replication. (Microbial infection) Plays a role in modulating the adaptive immune response to Yellow fever virus infection; promotes dendritic cells to initiate autophagy and antigene presentation to both CD4(+) and CD8(+) T-cells under amino acid starvation. In Mus musculus (Mouse), this protein is eIF-2-alpha kinase GCN2.